Consider the following 752-residue polypeptide: Polyribonucleotide nucleotidyltransferase (752 aa).

Positions 529 and 535 each coordinate Mg(2+). The region spanning 595–654 (PRVTTIKVPVDKIGEVIGPKGKVINAITEETGAQISIEDDGTVFVGATDGPSAQAAIDKI) is the KH domain. An S1 motif domain is found at 666 to 735 (GERFLGTVVK…KRGKISLILV (70 aa)).

Belongs to the polyribonucleotide nucleotidyltransferase family. Mg(2+) is required as a cofactor.

The protein resides in the cytoplasm. The enzyme catalyses RNA(n+1) + phosphate = RNA(n) + a ribonucleoside 5'-diphosphate. In terms of biological role, involved in mRNA degradation. Catalyzes the phosphorolysis of single-stranded polyribonucleotides processively in the 3'- to 5'-direction. This chain is Polyribonucleotide nucleotidyltransferase, found in Mycobacterium tuberculosis (strain ATCC 25177 / H37Ra).